The following is a 1006-amino-acid chain: Kinesin-like protein KIN-5C (1006 aa).

Residues 9–355 form the Kinesin motor domain; it reads NVQVLLRCRP…LDYAHRAKNI (347 aa). An ATP-binding site is contributed by 95 to 102; the sequence is GQTGTGKT. Positions 371–522 form a coiled coil; sequence IKDLYGEIER…NASLFQKIAR (152 aa).

The protein belongs to the TRAFAC class myosin-kinesin ATPase superfamily. Kinesin family. KIN-5/BimC subfamily.

It localises to the cytoplasm. Its subcellular location is the cytoskeleton. It is found in the spindle. Functionally, responsible for microtubule translocation. May be important for the organization of phragmoplast-specific arrays of microtubules. Plays an essential role in stabilizing the mitotic spindle. Required during mitotic cytokinesis. In Nicotiana tabacum (Common tobacco), this protein is Kinesin-like protein KIN-5C.